Consider the following 324-residue polypeptide: DNA primase small subunit PriS (324 aa).

Residues Asp94, Asp96, and Asp274 contribute to the active site.

The protein belongs to the eukaryotic-type primase small subunit family. Heterodimer of a small subunit (PriS) and a large subunit (PriL). Requires Mg(2+) as cofactor. The cofactor is Mn(2+).

Functionally, catalytic subunit of DNA primase, an RNA polymerase that catalyzes the synthesis of short RNA molecules used as primers for DNA polymerase during DNA replication. The small subunit contains the primase catalytic core and has DNA synthesis activity on its own. Binding to the large subunit stabilizes and modulates the activity, increasing the rate of DNA synthesis while decreasing the length of the DNA fragments, and conferring RNA synthesis capability. The DNA polymerase activity may enable DNA primase to also catalyze primer extension after primer synthesis. May also play a role in DNA repair. This is DNA primase small subunit PriS from Methanobrevibacter smithii (strain ATCC 35061 / DSM 861 / OCM 144 / PS).